The chain runs to 275 residues: Penicillin-insensitive murein endopeptidase (275 aa).

An N-terminal signal peptide occupies residues 1-19; sequence MKNWIVGMVALVTMVPVMA. 3 disulfides stabilise this stretch: cysteine 44–cysteine 264, cysteine 187–cysteine 235, and cysteine 216–cysteine 223. Zn(2+)-binding residues include histidine 110, histidine 113, aspartate 120, aspartate 147, and histidine 211. The segment at 227 to 262 is disordered; it reads DTPPPGDGCGAELESWFQPPPPSAKPGKTLPPPLPP. Over residues 244-262 the composition is skewed to pro residues; the sequence is QPPPPSAKPGKTLPPPLPP.

This sequence belongs to the peptidase M74 family. Dimer. The cofactor is Zn(2+).

It localises to the periplasm. Its function is as follows. Murein endopeptidase that cleaves the D-alanyl-meso-2,6-diamino-pimelyl amide bond that connects peptidoglycan strands. Likely plays a role in the removal of murein from the sacculus. This Yersinia pestis bv. Antiqua (strain Antiqua) protein is Penicillin-insensitive murein endopeptidase.